Here is a 401-residue protein sequence, read N- to C-terminus: Beta-ketoadipyl-CoA thiolase (401 aa).

Catalysis depends on Cys90, which acts as the Acyl-thioester intermediate. Active-site proton acceptor residues include His357 and Cys387.

The protein belongs to the thiolase-like superfamily. Thiolase family.

It catalyses the reaction succinyl-CoA + acetyl-CoA = 3-oxoadipyl-CoA + CoA. It participates in aromatic compound metabolism; beta-ketoadipate pathway; acetyl-CoA and succinyl-CoA from 3-oxoadipate: step 2/2. Catalyzes thiolytic cleavage of beta-ketoadipyl-CoA to succinyl-CoA and acetyl-CoA. This is Beta-ketoadipyl-CoA thiolase (pcaF) from Acinetobacter baylyi (strain ATCC 33305 / BD413 / ADP1).